We begin with the raw amino-acid sequence, 162 residues long: UPF0114 protein Shewmr4_0646 (162 aa).

4 helical membrane-spanning segments follow: residues 15 to 35 (IMAP…IKFF), 53 to 73 (LVLV…IVMV), 108 to 128 (KVAA…FMDV), and 136 to 156 (IMWY…MGYL).

It belongs to the UPF0114 family.

The protein resides in the cell membrane. This chain is UPF0114 protein Shewmr4_0646, found in Shewanella sp. (strain MR-4).